The chain runs to 264 residues: 3-methyl-2-oxobutanoate hydroxymethyltransferase (264 aa).

2 residues coordinate Mg(2+): Asp45 and Asp84. 3-methyl-2-oxobutanoate is bound by residues 45–46 (DS), Asp84, and Lys113. Glu115 provides a ligand contact to Mg(2+). The active-site Proton acceptor is Glu182.

Belongs to the PanB family. Homodecamer; pentamer of dimers. It depends on Mg(2+) as a cofactor.

Its subcellular location is the cytoplasm. The catalysed reaction is 3-methyl-2-oxobutanoate + (6R)-5,10-methylene-5,6,7,8-tetrahydrofolate + H2O = 2-dehydropantoate + (6S)-5,6,7,8-tetrahydrofolate. It participates in cofactor biosynthesis; (R)-pantothenate biosynthesis; (R)-pantoate from 3-methyl-2-oxobutanoate: step 1/2. Catalyzes the reversible reaction in which hydroxymethyl group from 5,10-methylenetetrahydrofolate is transferred onto alpha-ketoisovalerate to form ketopantoate. This Helicobacter hepaticus (strain ATCC 51449 / 3B1) protein is 3-methyl-2-oxobutanoate hydroxymethyltransferase.